A 249-amino-acid chain; its full sequence is Ribonuclease PH (249 aa).

Phosphate is bound by residues arginine 90 and 128–130; that span reads GTR.

It belongs to the RNase PH family. In terms of assembly, homohexameric ring arranged as a trimer of dimers.

The enzyme catalyses tRNA(n+1) + phosphate = tRNA(n) + a ribonucleoside 5'-diphosphate. Its function is as follows. Phosphorolytic 3'-5' exoribonuclease that plays an important role in tRNA 3'-end maturation. Removes nucleotide residues following the 3'-CCA terminus of tRNAs; can also add nucleotides to the ends of RNA molecules by using nucleoside diphosphates as substrates, but this may not be physiologically important. Probably plays a role in initiation of 16S rRNA degradation (leading to ribosome degradation) during starvation. The sequence is that of Ribonuclease PH from Parasynechococcus marenigrum (strain WH8102).